A 202-amino-acid chain; its full sequence is Na(+)-translocating NADH-quinone reductase subunit E (202 aa).

A run of 6 helical transmembrane segments spans residues 11 to 31 (AVFV…FIAI), 35 to 55 (VETA…TVPA), 81 to 101 (FLGL…LEML), 114 to 134 (GVFL…LFMV), 144 to 164 (TVYG…LAGI), and 180 to 200 (LGIT…FSGV).

It belongs to the NqrDE/RnfAE family. As to quaternary structure, composed of six subunits; NqrA, NqrB, NqrC, NqrD, NqrE and NqrF.

It localises to the cell inner membrane. It carries out the reaction a ubiquinone + n Na(+)(in) + NADH + H(+) = a ubiquinol + n Na(+)(out) + NAD(+). Functionally, NQR complex catalyzes the reduction of ubiquinone-1 to ubiquinol by two successive reactions, coupled with the transport of Na(+) ions from the cytoplasm to the periplasm. NqrA to NqrE are probably involved in the second step, the conversion of ubisemiquinone to ubiquinol. The chain is Na(+)-translocating NADH-quinone reductase subunit E from Pseudomonas aeruginosa (strain LESB58).